We begin with the raw amino-acid sequence, 418 residues long: CinA-like protein (418 aa).

The protein belongs to the CinA family.

This Leptospira interrogans serogroup Icterohaemorrhagiae serovar copenhageni (strain Fiocruz L1-130) protein is CinA-like protein.